The chain runs to 165 residues: C-phycoerythrin class 2 subunit alpha (165 aa).

Residue Cys-75 coordinates phycourobilin. Positions 83 and 140 each coordinate (2R,3E)-phycoerythrobilin.

Belongs to the phycobiliprotein family. In terms of assembly, heterodimer of an alpha and a beta chain. Contains two covalently linked phycoerythrobilin chromophores and one covalently linked phycourobilin chromophore.

It localises to the cellular thylakoid membrane. In terms of biological role, light-harvesting photosynthetic bile pigment-protein from the phycobiliprotein complex. The protein is C-phycoerythrin class 2 subunit alpha (mpeA) of Synechococcus sp. (strain WH8020).